A 162-amino-acid polypeptide reads, in one-letter code: 2-C-methyl-D-erythritol 2,4-cyclodiphosphate synthase (162 aa).

The a divalent metal cation site is built by Asp12 and His14. 4-CDP-2-C-methyl-D-erythritol 2-phosphate-binding positions include 12–14 and 38–39; these read DVH and HS. Residue His46 coordinates a divalent metal cation. Residues 60-62, 65-69, and Arg146 each bind 4-CDP-2-C-methyl-D-erythritol 2-phosphate; these read DIG and FPDTD.

Belongs to the IspF family. Homotrimer. The cofactor is a divalent metal cation.

The catalysed reaction is 4-CDP-2-C-methyl-D-erythritol 2-phosphate = 2-C-methyl-D-erythritol 2,4-cyclic diphosphate + CMP. It functions in the pathway isoprenoid biosynthesis; isopentenyl diphosphate biosynthesis via DXP pathway; isopentenyl diphosphate from 1-deoxy-D-xylulose 5-phosphate: step 4/6. In terms of biological role, involved in the biosynthesis of isopentenyl diphosphate (IPP) and dimethylallyl diphosphate (DMAPP), two major building blocks of isoprenoid compounds. Catalyzes the conversion of 4-diphosphocytidyl-2-C-methyl-D-erythritol 2-phosphate (CDP-ME2P) to 2-C-methyl-D-erythritol 2,4-cyclodiphosphate (ME-CPP) with a corresponding release of cytidine 5-monophosphate (CMP). In Bordetella petrii (strain ATCC BAA-461 / DSM 12804 / CCUG 43448), this protein is 2-C-methyl-D-erythritol 2,4-cyclodiphosphate synthase.